The following is a 474-amino-acid chain: Bifunctional protein HldE (474 aa).

Residues 1–318 (MKLSMPRFDQ…RAVQREQGSE (318 aa)) are ribokinase. 194-197 (NLSE) contributes to the ATP binding site. Asp-263 is an active-site residue. The cytidylyltransferase stretch occupies residues 343–474 (FTNGCFDILH…AIVEKIRQKG (132 aa)).

In the N-terminal section; belongs to the carbohydrate kinase PfkB family. The protein in the C-terminal section; belongs to the cytidylyltransferase family. Homodimer.

The enzyme catalyses D-glycero-beta-D-manno-heptose 7-phosphate + ATP = D-glycero-beta-D-manno-heptose 1,7-bisphosphate + ADP + H(+). The catalysed reaction is D-glycero-beta-D-manno-heptose 1-phosphate + ATP + H(+) = ADP-D-glycero-beta-D-manno-heptose + diphosphate. The protein operates within nucleotide-sugar biosynthesis; ADP-L-glycero-beta-D-manno-heptose biosynthesis; ADP-L-glycero-beta-D-manno-heptose from D-glycero-beta-D-manno-heptose 7-phosphate: step 1/4. It functions in the pathway nucleotide-sugar biosynthesis; ADP-L-glycero-beta-D-manno-heptose biosynthesis; ADP-L-glycero-beta-D-manno-heptose from D-glycero-beta-D-manno-heptose 7-phosphate: step 3/4. In terms of biological role, catalyzes the phosphorylation of D-glycero-D-manno-heptose 7-phosphate at the C-1 position to selectively form D-glycero-beta-D-manno-heptose-1,7-bisphosphate. Functionally, catalyzes the ADP transfer from ATP to D-glycero-beta-D-manno-heptose 1-phosphate, yielding ADP-D-glycero-beta-D-manno-heptose. This is Bifunctional protein HldE from Pseudomonas paraeruginosa (strain DSM 24068 / PA7) (Pseudomonas aeruginosa (strain PA7)).